The following is a 505-amino-acid chain: Probable folylpolyglutamate synthase (505 aa).

An ATP-binding site is contributed by Gly89–Ser92. Mg(2+)-binding residues include Ser121, Glu190, and His218. ATP contacts are provided by Arg332 and Asp346.

This sequence belongs to the folylpolyglutamate synthase family. A monovalent cation is required as a cofactor.

The protein resides in the mitochondrion inner membrane. The protein localises to the mitochondrion matrix. It localises to the cytoplasm. The catalysed reaction is (6S)-5,6,7,8-tetrahydrofolyl-(gamma-L-Glu)(n) + L-glutamate + ATP = (6S)-5,6,7,8-tetrahydrofolyl-(gamma-L-Glu)(n+1) + ADP + phosphate + H(+). Its pathway is cofactor biosynthesis; tetrahydrofolylpolyglutamate biosynthesis. Functionally, catalyzes conversion of folates to polyglutamate derivatives allowing concentration of folate compounds in the cell and the intracellular retention of these cofactors, which are important substrates for most of the folate-dependent enzymes that are involved in one-carbon transfer reactions involved in purine, pyrimidine and amino acid synthesis. The sequence is that of Probable folylpolyglutamate synthase (met7) from Schizosaccharomyces pombe (strain 972 / ATCC 24843) (Fission yeast).